A 48-amino-acid chain; its full sequence is U-reduvitoxin-Pr5a (48 aa).

A signal peptide spans 1 to 19 (MRLFLIFTFIVASLASVYG). 3 disulfide bridges follow: Cys20–Cys34, Cys27–Cys39, and Cys33–Cys44.

The protein belongs to the venom Ptu1-like knottin family. Expressed by the venom gland.

Its subcellular location is the secreted. Its function is as follows. Binds reversibly and blocks P/Q-type voltage-gated calcium channels (Cav). The chain is U-reduvitoxin-Pr5a from Platymeris rhadamanthus (Red spot assassin bug).